Here is a 225-residue protein sequence, read N- to C-terminus: tRNA (guanine-N(7)-)-methyltransferase (225 aa).

The S-adenosyl-L-methionine site is built by glutamate 56, glutamate 81, aspartate 108, and aspartate 131. Aspartate 131 is a catalytic residue. Substrate is bound by residues lysine 135, aspartate 167, and 204 to 207 (TKFE).

This sequence belongs to the class I-like SAM-binding methyltransferase superfamily. TrmB family.

The enzyme catalyses guanosine(46) in tRNA + S-adenosyl-L-methionine = N(7)-methylguanosine(46) in tRNA + S-adenosyl-L-homocysteine. Its pathway is tRNA modification; N(7)-methylguanine-tRNA biosynthesis. Its function is as follows. Catalyzes the formation of N(7)-methylguanine at position 46 (m7G46) in tRNA. This Legionella pneumophila (strain Corby) protein is tRNA (guanine-N(7)-)-methyltransferase.